The sequence spans 571 residues: Endonuclease/exonuclease/phosphatase family domain-containing protein 1 (571 aa).

A disordered region spans residues 1 to 20 (MGSTLGCHRSIPRDPSDLSH). Glycine 2 carries N-myristoyl glycine lipidation. Basic and acidic residues predominate over residues 11–20 (IPRDPSDLSH). A phosphoserine mark is found at serine 16, serine 21, and serine 25. Residues 38-67 (ERLNINTATEEELMTLPGVTRAVARSIVEY) form the HhH domain. A phosphoserine mark is found at serine 106, serine 110, serine 162, and serine 175. A disordered region spans residues 202–227 (SRPPSTHTNGGLTFTAKPHPSPTSLS). Positions 204 to 213 (PPSTHTNGGL) are enriched in polar residues. The residue at position 267 (threonine 267) is a Phosphothreonine. Serine 430 bears the Phosphoserine mark. Residues 548 to 571 (RKEGPRSGNGLTLERSEANIKHER) form a disordered region. Residues 561–571 (ERSEANIKHER) are compositionally biased toward basic and acidic residues.

The polypeptide is Endonuclease/exonuclease/phosphatase family domain-containing protein 1 (EEPD1) (Bos taurus (Bovine)).